The primary structure comprises 355 residues: Myricetin 7/4'-O-methyltransferase 2 (355 aa).

An S-adenosyl-L-methionine-binding site is contributed by aspartate 221. Histidine 259 serves as the catalytic Proton acceptor.

It belongs to the class I-like SAM-binding methyltransferase superfamily. Cation-independent O-methyltransferase family. As to quaternary structure, homodimer. Mainly expressed in leaves secreting glandular trichomes types 1 and 4 and, to a lesser extent, in storage trichomes type 6.

The enzyme catalyses quercetin + S-adenosyl-L-methionine = rhamnetin + S-adenosyl-L-homocysteine + H(+). It catalyses the reaction kaempferol + S-adenosyl-L-methionine = kaempferide + S-adenosyl-L-homocysteine + H(+). The catalysed reaction is myricetin + S-adenosyl-L-methionine = 7-O-methylmyricetin + S-adenosyl-L-homocysteine + H(+). It carries out the reaction kaempferide + S-adenosyl-L-methionine = 7,4'-O-dimethylkaempferol + S-adenosyl-L-homocysteine + H(+). The enzyme catalyses isorhamnetin + S-adenosyl-L-methionine = 3',4'-O-dimethylquercetin + S-adenosyl-L-homocysteine + 2 H(+). It catalyses the reaction 3',4',5,7-tetrahydroxy-3-methoxyflavone + S-adenosyl-L-methionine = 3',4',5-trihydroxy-3,7-dimethoxyflavone + S-adenosyl-L-homocysteine + H(+). The catalysed reaction is rhamnetin + S-adenosyl-L-methionine = 7,4'-O-dimethylquercetin + S-adenosyl-L-homocysteine + H(+). It carries out the reaction syringetin + S-adenosyl-L-methionine = 7,3',5'-O-trimethylmyricetin + S-adenosyl-L-homocysteine + H(+). The enzyme catalyses 3',4',5'-O-trimethylmyricetin + S-adenosyl-L-methionine = 7,3',4',5'-O-tetramethylmyricetin + S-adenosyl-L-homocysteine. It participates in flavonoid metabolism. In terms of biological role, flavonoid 7/4'-O-methyltransferase involved in the biosynthesis of polymethoxylated flavonoids natural products such as myricetin derivatives, aroma compounds possessing antioxidant properties and exhibiting pharmacological activities such as anti-carcinogen, anti-viral, anti-thrombotic, anti-diabetic, anti-atherosclerotic, and anti-inflammatory effects. Catalyzes S-adenosylmethionine-dependent regioselective 7/4'-O-methylation of flavonoids; active on various hydroxylated flavonoid substrates, including myricetin, quercetin and kaempferol. Mediates the formation of 4'-methyl derivatives from kaempferol, 3'-methyl quercetin (isorhamnetin), 7-methyl quercetin (rhamnetin) and 3'-methyl myricetin, producing 4'-methyl kaempferol (kaempferide), 3',4'-dimethyl quercetin (4'-O-methyl isorhamnetin), 7,4'-dimethyl quercetin (4'-O-methyl rhamnetin, rhamnacene) and 3',4'-dimethyl myricetin, respectively. Triggers the 7-O-methylation of quercetin, myricetin, 4'-methyl kaempferol (kaempferide), 3-methyl quercetin, 3',5'-dimethyl myricetin (syringetin) and 3',4',5'-trimethyl myricetin, thus leading to production of 7-methyl quercetin (rhamnetin), 7-methyl myricetin, 7,4'-dimethyl kaempferol (7-O-methyl kaempferide), 3,7-dimethyl quercetin, 7,3',5'-trimethyl myricetin (7-O-methyl syringetin) and 7,3',4',5'-tetramethyl myricetin, respectively. This Solanum habrochaites (Wild tomato) protein is Myricetin 7/4'-O-methyltransferase 2.